Reading from the N-terminus, the 270-residue chain is MYKLIAIDMDGTLLNDHHEVTEEVRDALHAAKAEGVKIVLCTGRPIGGVQRYLDELNLIEEGDYVIAYNGALVQNTHTNEVVSELSLGYDDLTSLYDLSLELKTPMHFFDSSNLYTPNRDISEFTVYESYVTQVPLHFRKIDEVPKDILIPKVMFIDKPENLSRVITSIPKDVREKYTMVRSAPFFYEILHSEASKGNAVRQLAQLLGIEQAEVMCIGDNGNDLTMIEWAGCGVAMANAIPEVLEAANFQTRSNNEHGVAHAIHELVLAK.

The active-site Nucleophile is Asp8. A Mg(2+)-binding site is contributed by Asp8. Phosphate is bound at residue Met9. Asp10 provides a ligand contact to Mg(2+). Phosphate contacts are provided by residues 42 to 43 (TG) and Lys196. Asp219 is a binding site for Mg(2+). Position 222 (Asn222) interacts with phosphate.

Belongs to the HAD-like hydrolase superfamily. Cof family. The cofactor is Mg(2+).

The polypeptide is Putative phosphatase YxeH (yxeH) (Bacillus subtilis (strain 168)).